The sequence spans 481 residues: GTPase Der (481 aa).

EngA-type G domains are found at residues 3 to 166 (PVVA…ESDF) and 194 to 367 (IKLA…MSAT). Residues 9–16 (GRPNVGKS), 56–60 (DTGGI), 118–121 (NKVD), 200–207 (GKPNVGKS), 247–251 (DTAGV), and 312–315 (NKWD) contribute to the GTP site. In terms of domain architecture, KH-like spans 368-452 (KRINTALLTQ…PIKIEFREGN (85 aa)).

This sequence belongs to the TRAFAC class TrmE-Era-EngA-EngB-Septin-like GTPase superfamily. EngA (Der) GTPase family. Associates with the 50S ribosomal subunit.

Functionally, GTPase that plays an essential role in the late steps of ribosome biogenesis. This chain is GTPase Der, found in Alteromonas mediterranea (strain DSM 17117 / CIP 110805 / LMG 28347 / Deep ecotype).